The chain runs to 350 residues: uncharacterized protein (350 aa).

3 disordered regions span residues 1–21 (MDSF…SSLN), 237–266 (NSDV…PISP), and 278–298 (EMST…KKRT). Composition is skewed to polar residues over residues 10 to 21 (KPTTATSNSSLN) and 246 to 259 (EDSS…TKPS). Basic residues predominate over residues 287 to 298 (SRSRTPSSKKRT).

The protein localises to the nucleus. This is an uncharacterized protein from Schizosaccharomyces pombe (strain 972 / ATCC 24843) (Fission yeast).